A 478-amino-acid chain; its full sequence is Histidine--tRNA ligase (478 aa).

The protein belongs to the class-II aminoacyl-tRNA synthetase family. Homodimer.

The protein resides in the cytoplasm. It carries out the reaction tRNA(His) + L-histidine + ATP = L-histidyl-tRNA(His) + AMP + diphosphate + H(+). The sequence is that of Histidine--tRNA ligase (hisS) from Xanthomonas axonopodis pv. citri (strain 306).